The chain runs to 582 residues: 2-succinyl-5-enolpyruvyl-6-hydroxy-3-cyclohexene-1-carboxylate synthase (582 aa).

It belongs to the TPP enzyme family. MenD subfamily. In terms of assembly, homodimer. Mg(2+) serves as cofactor. The cofactor is Mn(2+). Requires thiamine diphosphate as cofactor.

The catalysed reaction is isochorismate + 2-oxoglutarate + H(+) = 5-enolpyruvoyl-6-hydroxy-2-succinyl-cyclohex-3-ene-1-carboxylate + CO2. It functions in the pathway quinol/quinone metabolism; 1,4-dihydroxy-2-naphthoate biosynthesis; 1,4-dihydroxy-2-naphthoate from chorismate: step 2/7. Its pathway is cofactor biosynthesis; phylloquinone biosynthesis. In terms of biological role, catalyzes the thiamine diphosphate-dependent decarboxylation of 2-oxoglutarate and the subsequent addition of the resulting succinic semialdehyde-thiamine pyrophosphate anion to isochorismate to yield 2-succinyl-5-enolpyruvyl-6-hydroxy-3-cyclohexene-1-carboxylate (SEPHCHC). This is 2-succinyl-5-enolpyruvyl-6-hydroxy-3-cyclohexene-1-carboxylate synthase from Synechococcus elongatus (strain ATCC 33912 / PCC 7942 / FACHB-805) (Anacystis nidulans R2).